Reading from the N-terminus, the 498-residue chain is MGDRGGAGSSRRRRTGSRVSVQGGSGPKVEEDEVRDAAVSPDLGAGGDAPAPAPAPAHTRDKDGRTSVGDGYWDLRCHRLQDSLFSSDSGFSNYRGILNWCVVMLILSNARLFLENLIKYGILVDPIQVVSLFLKDPYSWPAPCVIIASNIFVVAAFQIEKRLAVGALTEQMGLLLHVVNLATIICFPAAVALLVESITPVGSVFALASYSIMFLKLYSYRDVNLWCRQRRVKAKAVSTGKKVSGAAAQQAVSYPDNLTYRDLYYFIFAPTLCYELNFPRSPRIRKRFLLRRVLEMLFFTQLQVGLIQQWMVPTIQNSMKPFKDMDYSRIIERLLKLAVPNHLIWLIFFYWFFHSCLNAVAELLQFGDREFYRDWWNAESVTYFWQNWNIPVHKWCIRHFYKPMLRHGSSKWVARTGVFLTSAFFHEYLVSVPLRMFRLWAFTAMMAQVPLAWIVGRFFQGNYGNAAVWVTLIIGQPVAVLMYVHDYYVLNYDAPVGV.

A disordered region spans residues 1–66 (MGDRGGAGSS…AHTRDKDGRT (66 aa)). Residues 1 to 92 (MGDRGGAGSS…SLFSSDSGFS (92 aa)) are Cytoplasmic-facing. Residues 1 to 100 (MGDRGGAGSS…FSNYRGILNW (100 aa)) form an involved in homomerization region. Ser-20 is modified (phosphoserine). A helical transmembrane segment spans residues 93–127 (NYRGILNWCVVMLILSNARLFLENLIKYGILVDPI). At 128-139 (QVVSLFLKDPYS) the chain is on the lumenal side. The segment at 128–139 (QVVSLFLKDPYS) is extracellular loop 1 (EL1). A helical membrane pass occupies residues 140 to 165 (WPAPCVIIASNIFVVAAFQIEKRLAV). Residues 140-498 (WPAPCVIIAS…VLNYDAPVGV (359 aa)) form an MBOAT fold region. The Cytoplasmic segment spans residues 166-170 (GALTE). The helical transmembrane segment at 171 to 193 (QMGLLLHVVNLATIICFPAAVAL) threads the bilayer. Residues 194–200 (LVESITP) lie on the Lumenal side of the membrane. The helical transmembrane segment at 201–232 (VGSVFALASYSIMFLKLYSYRDVNLWCRQRRV) threads the bilayer. Over 233-284 (KAKAVSTGKKVSGAAAQQAVSYPDNLTYRDLYYFIFAPTLCYELNFPRSPRI) the chain is Cytoplasmic. The tract at residues 235 to 287 (KAVSTGKKVSGAAAQQAVSYPDNLTYRDLYYFIFAPTLCYELNFPRSPRIRKR) is intracellular loop 1 (IL1). Residues 285–319 (RKRFLLRRVLEMLFFTQLQVGLIQQWMVPTIQNSM) traverse the membrane as a helical segment. Residues 320–326 (KPFKDMD) are Lumenal-facing. A helical membrane pass occupies residues 327 to 364 (YSRIIERLLKLAVPNHLIWLIFFYWFFHSCLNAVAELL). At 365 to 410 (QFGDREFYRDWWNAESVTYFWQNWNIPVHKWCIRHFYKPMLRHGSS) the chain is on the cytoplasmic side. The tract at residues 365–410 (QFGDREFYRDWWNAESVTYFWQNWNIPVHKWCIRHFYKPMLRHGSS) is intracellular loop 2 (IL2). The FYXDWWN motif motif lies at 371–377 (FYRDWWN). Residues 385 to 393 (WQNWNIPVH), Tyr-401, and Arg-415 contribute to the an acyl-CoA site. The interval 391-405 (PVHKWCIRHFYKPML) is amphipathic helix (AH). A helical transmembrane segment spans residues 411–431 (KWVARTGVFLTSAFFHEYLVS). His-426 is a catalytic residue. At 432-439 (VPLRMFRL) the chain is on the lumenal side. The helical transmembrane segment at 440 to 458 (WAFTAMMAQVPLAWIVGRF) threads the bilayer. The Cytoplasmic portion of the chain corresponds to 459–460 (FQ). The helical transmembrane segment at 461–492 (GNYGNAAVWVTLIIGQPVAVLMYVHDYYVLNY) threads the bilayer. Tyr-488 provides a ligand contact to an acyl-CoA. Over 493–498 (DAPVGV) the chain is Lumenal.

It belongs to the membrane-bound acyltransferase family. Sterol o-acyltransferase subfamily. Homodimer or homotetramer; both forms have similar enzymatic activities.

Its subcellular location is the endoplasmic reticulum membrane. It catalyses the reaction an acyl-CoA + a 1,2-diacyl-sn-glycerol = a triacyl-sn-glycerol + CoA. The enzyme catalyses all-trans-retinol + an acyl-CoA = an all-trans-retinyl ester + CoA. It carries out the reaction 1-octadecanoyl-2-(5Z,8Z,11Z,14Z-eicosatetraenoyl)-sn-glycerol + (9Z)-octadecenoyl-CoA = 1-octadecanoyl-2-(5Z,8Z,11Z,14Z)-eicosatetraenoyl-3-(9Z)-octadecenoyl-sn-glycerol + CoA. The catalysed reaction is hexadecane-1,2-diol + 2 hexadecanoyl-CoA = 1,2-O,O-dihexadecanoyl-1,2-hexadecanediol + 2 CoA. It catalyses the reaction hexadecane-1,2-diol + hexadecanoyl-CoA = 2-hydroxyhexadecyl hexadecanoate + CoA. The enzyme catalyses 2-(9Z-octadecenoyl)-glycerol + hexadecanoyl-CoA = 1-hexadecanoyl-2-(9Z-octadecenoyl)-sn-glycerol + CoA. It carries out the reaction 1,2-di-(9Z-octadecenoyl)-sn-glycerol + hexadecanoyl-CoA = 1,2-di-(9Z)-octadecenoyl-3-hexadecanoyl-sn-glycerol + CoA. The catalysed reaction is hexadecan-1-ol + hexadecanoyl-CoA = hexadecanyl hexadecanoate + CoA. It catalyses the reaction all-trans-retinol + hexadecanoyl-CoA = all-trans-retinyl hexadecanoate + CoA. The enzyme catalyses 13-cis-retinol + hexadecanoyl-CoA = 13-cis-retinyl hexadecanoate + CoA. It carries out the reaction 1,2-di-(9Z-octadecenoyl)-sn-glycerol + (9Z)-octadecenoyl-CoA = 1,2,3-tri-(9Z-octadecenoyl)-glycerol + CoA. The catalysed reaction is 1,3-di-(9Z-octadecenoyl)-glycerol + (9Z)-octadecenoyl-CoA = 1,2,3-tri-(9Z-octadecenoyl)-glycerol + CoA. It catalyses the reaction 2,3-di-(9Z)-octadecenoyl-sn-glycerol + (9Z)-octadecenoyl-CoA = 1,2,3-tri-(9Z-octadecenoyl)-glycerol + CoA. The enzyme catalyses 1-O-(9Z-octadecenyl)-glycerol + (9Z)-octadecenoyl-CoA = 1-O-(9Z-octadecyl)-3-(9Z-octadecenoyl)-glycerol + CoA. It carries out the reaction 1-(9Z-octadecenoyl)-glycerol + (9Z)-octadecenoyl-CoA = 1,2-di-(9Z-octadecenoyl)-glycerol + CoA. The catalysed reaction is 2-(9Z-octadecenoyl)-glycerol + (9Z)-octadecenoyl-CoA = 1,2-di-(9Z-octadecenoyl)-sn-glycerol + CoA. It catalyses the reaction 1-O-(9Z-octadecyl)-3-(9Z-octadecenoyl)-glycerol + (9Z)-octadecenoyl-CoA = 1-O-(9Z-octadecenyl)-2,3-di-(9Z-octadecenoyl)glycerol + CoA. The enzyme catalyses 1,2-di-(9Z-octadecenoyl)-glycerol + (9Z)-octadecenoate + H(+) = 1,2,3-tri-(9Z-octadecenoyl)-glycerol + H2O. It functions in the pathway lipid metabolism; glycerolipid metabolism. In terms of biological role, catalyzes the terminal and only committed step in triacylglycerol synthesis by using diacylglycerol and fatty acyl CoA as substrates. Highly expressed in epithelial cells of the small intestine and its activity is essential for the absorption of dietary fats. In liver, plays a role in esterifying exogenous fatty acids to glycerol, and is required to synthesize fat for storage. Also present in female mammary glands, where it produces fat in the milk. May be involved in VLDL (very low density lipoprotein) assembly. In contrast to DGAT2 it is not essential for survival. Functions as the major acyl-CoA retinol acyltransferase (ARAT) in the skin, where it acts to maintain retinoid homeostasis and prevent retinoid toxicity leading to skin and hair disorders. Exhibits additional acyltransferase activities, includin acyl CoA:monoacylglycerol acyltransferase (MGAT), wax monoester and wax diester synthases. Also able to use 1-monoalkylglycerol (1-MAkG) as an acyl acceptor for the synthesis of monoalkyl-monoacylglycerol (MAMAG). The chain is Diacylglycerol O-acyltransferase 1 from Mus musculus (Mouse).